A 921-amino-acid polypeptide reads, in one-letter code: Protein translocase subunit SecA (921 aa).

Residues Gln87, 105–109, and Asp516 contribute to the ATP site; that span reads GEGKT. Residues Cys905, Cys907, Cys916, and His917 each coordinate Zn(2+).

It belongs to the SecA family. Monomer and homodimer. Part of the essential Sec protein translocation apparatus which comprises SecA, SecYEG and auxiliary proteins SecDF-YajC and YidC. Zn(2+) is required as a cofactor.

It localises to the cell inner membrane. The protein resides in the cytoplasm. The enzyme catalyses ATP + H2O + cellular proteinSide 1 = ADP + phosphate + cellular proteinSide 2.. Functionally, part of the Sec protein translocase complex. Interacts with the SecYEG preprotein conducting channel. Has a central role in coupling the hydrolysis of ATP to the transfer of proteins into and across the cell membrane, serving both as a receptor for the preprotein-SecB complex and as an ATP-driven molecular motor driving the stepwise translocation of polypeptide chains across the membrane. This chain is Protein translocase subunit SecA, found in Albidiferax ferrireducens (strain ATCC BAA-621 / DSM 15236 / T118) (Rhodoferax ferrireducens).